A 2458-amino-acid polypeptide reads, in one-letter code: MVLLLCLSCLIFSCLTFSWLKIWGKMTDSKPITKSKSEANLIPSQEPFPASDNSGETPQRNGEGHTLPKTPSQAEPASHKGPKDAGRRRNSLPPSHQKPPRNPLSSSDAAPSPELQANGTGTQGLEATDTNGLSSSARPQGQQAGSPSKEDKKQANIKRQLMTNFILGSFDDYSSDEDSVAGSSRESTRKGSRASLGALSLEAYLTTGEAETRVPTMRPSMSGLHLVKRGREHKKLDLHRDFTVASPAEFVTRFGGDRVIEKVLIANNGIAAVKCMRSIRRWAYEMFRNERAIRFVVMVTPEDLKANAEYIKMADHYVPVPGGPNNNNYANVELIVDIAKRIPVQAVWAGWGHASENPKLPELLCKNGVAFLGPPSEAMWALGDKIASTVVAQTLQVPTLPWSGSGLTVEWTEDDLQQGKRISVPEDVYDKGCVKDVDEGLEAAERIGFPLMIKASEGGGGKGIRKAESAEDFPILFRQVQSEIPGSPIFLMKLAQHARHLEVQILADQYGNAVSLFGRDCSIQRRHQKIVEEAPATIAPLAIFEFMEQCAIRLAKTVGYVSAGTVEYLYSQDGSFHFLELNPRLQVEHPCTEMIADVNLPAAQLQIAMGVPLHRLKDIRLLYGESPWGVTPISFETPSNPPLARGHVIAARITSENPDEGFKPSSGTVQELNFRSSKNVWGYFSVAATGGLHEFADSQFGHCFSWGENREEAISNMVVALKELSIRGDFRTTVEYLINLLETESFQNNDIDTGWLDYLIAEKVQAEKPDIMLGVVCGALNVADAMFRTCMTDFLHSLERGQVLPADSLLNLVDVELIYGGVKYILKVARQSLTMFVLIMNGCHIEIDAHRLNDGGLLLSYNGNSYTTYMKEEVDSYRITIGNKTCVFEKENDPTVLRSPSAGKLTQYTVEDGGHVEAGSSYAEMEVMKMIMTLNVQERGRVKYIKRPGAVLEAGCVVARLELDDPSKVHPAEPFTGELPAQQTLPILGEKLHQVFHSVLENLTNVMSGFCLPEPVFSIKLKEWVQKLMMTLRHPSLPLLELQEIMTSVAGRIPAPVEKSVRRVMAQYASNITSVLCQFPSQQIATILDCHAATLQRKADREVFFINTQSIVQLVQRYRSGIRGYMKTVVLDLLRRYLRVEHHFQQAHYDKCVINLREQFKPDMSQVLDCIFSHAQVAKKNQLVIMLIDELCGPDPSLSDELISILNELTQLSKSEHCKVALRARQILIASHLPSYELRHNQVESIFLSAIDMYGHQFCPENLKKLILSETTIFDVLPTFFYHANKVVCMASLEVYVRRGYIAYELNSLQHRQLPDGTCVVEFQFMLPSSHPNRMTVPISITNPDLLRHSTELFMDSGFSPLCQRMGAMVAFRRFEDFTRNFDEVISCFANVPKDTPLFSEARTSLYSEDDCKSLREEPIHILNVSIQCADHLEDEALVPILRTFVQSKKNILVDYGLRRITFLIAQEKEFPKFFTFRARDEFAEDRIYRHLEPALAFQLELNRMRNFDLTAVPCANHKMHLYLGAAKVKEGVEVTDHRFFIRAIIRHSDLITKEASFEYLQNEGERLLLEAMDELEVAFNNTSVRTDCNHIFLNFVPTVIMDPFKIEESVRYMVMRYGSRLWKLRVLQAEVKINIRQTTTGSAVPIRLFITNESGYYLDISLYKEVTDSRSGNIMFHSFGNKQGPQHGMLINTPYVTKDLLQAKRFQAQTLGTTYIYDFPEMFRQALFKLWGSPDKYPKDILTYTELVLDSQGQLVEMNRLPGGNEVGMVAFKMRFKTQEYPEGRDVIVIGNDITFRIGSFGPGEDLLYLRASEMARAEGIPKIYVAANSGARIGMAEEIKHMFHVAWVDPEDPHKGFKYLYLTPQDYTRISSLNSVHCKHIEEGGESRYMITDIIGKDDGLGVENLRGSGMIAGESSLAYEEIVTISLVTCRAIGIGAYLVRLGQRVIQVENSHIILTGASALNKVLGREVYTSNNQLGGVQIMHYNGVSHITVPDDFEGVYTILEWLSYMPKDNHSPVPIITPTDPIDREIEFLPSRAPYDPRWMLAGRPHPTLKGTWQSGFFDHGSFKEIMAPWAQTVVTGRARLGGIPVGVIAVETRTVEVAVPADPANLDSEAKIIQQAGQVWFPDSAYKTAQAVKDFNREKLPLMIFANWRGFSGGMKDMYDQVLKFGAYIVDGLRQYKQPILIYIPPYAELRGGSWVVIDATINPLCIEMYADKESRGGVLEPEGTVEIKFRKKDLIKSMRRIDPAYKKLMEQLGEPDLSDKDRKDLEGRLKAREDLLLPIYHQVAVQFADFHDTPGRMLEKGVISDILEWKTARTFLYWRLRRLLLEDQVKQEILQASGELSHVHIQSMLRRWFVETEGAVKAYLWDNNQVVVQWLEQHWQAGDGPRSTIRENITYLKHDSVLKTIRGLVEENPEVAVDCVIYLSQHISPAERAQVVHLLSTMDSPAST.

Position 35 is a phosphoserine (S35). Residues 35-155 form a disordered region; it reads SKSEANLIPS…SPSKEDKKQA (121 aa). A compositionally biased stretch (polar residues) spans 51 to 60; that stretch reads SDNSGETPQR. Residue T70 is modified to Phosphothreonine. Basic and acidic residues predominate over residues 77–87; the sequence is ASHKGPKDAGR. S91 and S95 each carry phosphoserine. A compositionally biased stretch (polar residues) spans 103 to 146; the sequence is PLSSSDAAPSPELQANGTGTQGLEATDTNGLSSSARPQGQQAGS. Phosphoserine occurs at positions 169, 175, 192, 195, and 200. The tract at residues 174-193 is disordered; that stretch reads SSDEDSVAGSSRESTRKGSR. Phosphothreonine is present on T207. Position 220 is a phosphoserine (S220). A Phosphoserine; by AMPK modification is found at S222. The Biotin carboxylation domain maps to 259-761; it reads VIEKVLIANN…DTGWLDYLIA (503 aa). The 196-residue stretch at 414 to 609 folds into the ATP-grasp domain; sequence DDLQQGKRIS…LPAAQLQIAM (196 aa). ATP is bound at residue 458–463; it reads GGGGKG. A Phosphoserine modification is found at S469. The Mg(2+) site is built by E567, E580, and N582. Positions 567, 580, and 582 each coordinate Mn(2+). The active site involves R584. Position 753 is a phosphothreonine (T753). A Biotinyl-binding domain is found at 888-962; sequence FEKENDPTVL…EAGCVVARLE (75 aa). The residue at position 929 (K929) is an N6-biotinyllysine. At S1340 the chain carries Phosphoserine. Residue T1342 is modified to Phosphothreonine. S1360 and S1405 each carry phosphoserine. Residues 1695-2025 form the CoA carboxyltransferase N-terminal domain; sequence PYVTKDLLQA…DNHSPVPIIT (331 aa). The segment at 1695-2345 is carboxyltransferase; it reads PYVTKDLLQA…EDQVKQEILQ (651 aa). Positions 1934, 2238, and 2240 each coordinate CoA. The 317-residue stretch at 2029-2345 folds into the CoA carboxyltransferase C-terminal domain; the sequence is PIDREIEFLP…EDQVKQEILQ (317 aa).

Monomer, homodimer, and homotetramer. Forms filamentous polymers. Interacts with MID1IP1; interaction with MID1IP1 promotes oligomerization and increases its activity in a citrate-dependent manner. It depends on biotin as a cofactor. Mg(2+) serves as cofactor. Requires Mn(2+) as cofactor. In terms of processing, the biotin cofactor is covalently attached to the central biotinyl-binding domain and is required for the catalytic activity. Post-translationally, phosphorylation at Ser-222 by AMPK inactivates the enzyme. Required for the maintenance of skeletal muscle lipid and glucose homeostasis. Widely expressed with highest levels in heart, skeletal muscle, liver, adipose tissue, mammary gland, adrenal gland and colon. Isoform 3 is expressed in skeletal muscle, adipose tissue and liver (at protein level). Isoform 3 is detected at high levels in adipose tissue with lower levels in heart, liver, skeletal muscle and testis.

The protein localises to the mitochondrion. It catalyses the reaction hydrogencarbonate + acetyl-CoA + ATP = malonyl-CoA + ADP + phosphate + H(+). The protein operates within lipid metabolism; malonyl-CoA biosynthesis; malonyl-CoA from acetyl-CoA: step 1/1. Activity is increased by oligomerization of the protein into filaments. The oligomerization and the activity of the enzyme are inhibited by phosphorylation at Ser-222. Inhibited by its product, malonyl-CoA. Activated by citrate. Activation by MID1IP1 is citrate-dependent. Soraphen A, inhibits the enzyme by preventing the formation of active filamentous oligomers. In terms of biological role, mitochondrial enzyme that catalyzes the carboxylation of acetyl-CoA to malonyl-CoA and plays a central role in fatty acid metabolism. Catalyzes a 2 steps reaction starting with the ATP-dependent carboxylation of the biotin carried by the biotin carboxyl carrier (BCC) domain followed by the transfer of the carboxyl group from carboxylated biotin to acetyl-CoA. Through the production of malonyl-CoA that allosterically inhibits carnitine palmitoyltransferase 1 at the mitochondria, negatively regulates fatty acid oxidation. Together with its cytosolic isozyme ACACA, which is involved in de novo fatty acid biosynthesis, promotes lipid storage. The polypeptide is Acetyl-CoA carboxylase 2 (Homo sapiens (Human)).